Here is a 379-residue protein sequence, read N- to C-terminus: Histidinol-phosphate aminotransferase (379 aa).

Lysine 236 bears the N6-(pyridoxal phosphate)lysine mark.

The protein belongs to the class-II pyridoxal-phosphate-dependent aminotransferase family. Histidinol-phosphate aminotransferase subfamily. As to quaternary structure, homodimer. Pyridoxal 5'-phosphate serves as cofactor.

The catalysed reaction is L-histidinol phosphate + 2-oxoglutarate = 3-(imidazol-4-yl)-2-oxopropyl phosphate + L-glutamate. It participates in amino-acid biosynthesis; L-histidine biosynthesis; L-histidine from 5-phospho-alpha-D-ribose 1-diphosphate: step 7/9. This Desulfotalea psychrophila (strain LSv54 / DSM 12343) protein is Histidinol-phosphate aminotransferase.